The primary structure comprises 185 residues: TATA-box-binding protein 2 (185 aa).

2 consecutive repeat copies span residues 7–84 and 100–178.

This sequence belongs to the TBP family.

General factor that plays a role in the activation of archaeal genes transcribed by RNA polymerase. Binds specifically to the TATA box promoter element which lies close to the position of transcription initiation. The chain is TATA-box-binding protein 2 from Methanosarcina acetivorans (strain ATCC 35395 / DSM 2834 / JCM 12185 / C2A).